A 184-amino-acid polypeptide reads, in one-letter code: Protein CPn_0803/CP_1068/CPj0803/CpB0832 (184 aa).

This sequence belongs to the chlamydial CPn_0803/CT_584/TC_0873 family.

This Chlamydia pneumoniae (Chlamydophila pneumoniae) protein is Protein CPn_0803/CP_1068/CPj0803/CpB0832.